The following is a 223-amino-acid chain: MTIAKMIDHTALKPDTTKEQILTLTKEAREYGFASVCVNPTWVKLSAEQLAGAESVVCTVIGFPLGANTPEVKAFEVKDAIQNGAKEVDMVINIGALKDKDDELVERDIRAVVYAAKGKALVKVIIETCLLTDEEKVRACEIAVKAGTDFVKTSTGFSTGGATAEDIALMRKTVGPNIGVKASGGVRTKEDVEKMIEAGATRIGASAGVAIVSGEKPAKPDNY.

Residue D89 is the Proton donor/acceptor of the active site. The Schiff-base intermediate with acetaldehyde role is filled by K152. The Proton donor/acceptor role is filled by K181.

It belongs to the DeoC/FbaB aldolase family. DeoC type 1 subfamily.

It is found in the cytoplasm. The catalysed reaction is 2-deoxy-D-ribose 5-phosphate = D-glyceraldehyde 3-phosphate + acetaldehyde. Its pathway is carbohydrate degradation; 2-deoxy-D-ribose 1-phosphate degradation; D-glyceraldehyde 3-phosphate and acetaldehyde from 2-deoxy-alpha-D-ribose 1-phosphate: step 2/2. In terms of biological role, catalyzes a reversible aldol reaction between acetaldehyde and D-glyceraldehyde 3-phosphate to generate 2-deoxy-D-ribose 5-phosphate. This Listeria monocytogenes serotype 4b (strain F2365) protein is Deoxyribose-phosphate aldolase.